Consider the following 685-residue polypeptide: MSGPHRSFSFNQGDDGAGDAGDVSPIRSQEGHFMNSPPRHNDVSPVSARSQAMGSSPSSGFLSAHEHGDRGWGQNSGHTQAMRTNSTTPGMDNLGPAAVGGGISGIALGVANSHNRQSGIDAFRDTDGRNLPAERGYNTTGSDNPYVPTPPGGGSHGSAENLRPRDSYGSNVALGAAAAPAGQLTPGGSNPSQRSLFDSPYQGVGAMDAGPYQRQSAYSAAGDYPLVINPDEIADDGDDGFTPVPNGKSASSNARAIPAAAAGGAAGGGLFGLFKSKKADNPSYGPVPGAGLEAGEKSRWVKPTPGGGSRKRGWIVGLALAFIVVGAIVGGAVGGTLGNRENEAPDTTKSASSDTESNGDLNKDSSEIKDLMNNPDLHKVFPGMDYTPWGVQYPLCLKYPPSQNNVTRDVAVLSQLTNTVRLYGTDCNQTEMVLHAIDRLELKDMKVWLGVWIDSNDTTNDRQIKQLYKVLDDTKDISIFKGAIVGNEALYRAGNDIASAKKKLISYMDDVRNHFKEKNYDLPIATSDLGDNWKEDLVTATDLVMSNVHPFFAGVTAKEAAGWTWNFWNQNDVPLTKGTNKKQVISEVGWPSGGGNDCGSNNKCTDDTSGSVAGIDEMNQFMSDWICQALENGTDYFWFEAFDEPWKVQYNTKDENWEDKWGLMDAARKLKPGLKIPDCGGKTAA.

3 disordered regions span residues 1–96, 119–168, and 180–202; these read MSGP…NLGP, GIDA…RDSY, and PAGQ…SPYQ. Residues 1–312 lie on the Cytoplasmic side of the membrane; it reads MSGPHRSFSF…PTPGGGSRKR (312 aa). Composition is skewed to polar residues over residues 47 to 61 and 73 to 90; these read SARS…SSGF and GQNS…TTPG. Residues 313-333 form a helical; Signal-anchor for type II membrane protein membrane-spanning segment; sequence GWIVGLALAFIVVGAIVGGAV. Topologically, residues 334–685 are extracellular; that stretch reads GGTLGNRENE…IPDCGGKTAA (352 aa). The disordered stretch occupies residues 335–369; the sequence is GTLGNRENEAPDTTKSASSDTESNGDLNKDSSEIK. Residues 345–360 are compositionally biased toward polar residues; sequence PDTTKSASSDTESNGD. 3 N-linked (GlcNAc...) asparagine glycosylation sites follow: asparagine 405, asparagine 428, and asparagine 456. Glutamate 488 acts as the Proton donor in catalysis. The Nucleophile role is filled by glutamate 587. A glycan (N-linked (GlcNAc...) asparagine) is linked at asparagine 632.

This sequence belongs to the glycosyl hydrolase 17 family.

It is found in the cell membrane. The catalysed reaction is Hydrolysis of (1-&gt;3)-beta-D-glucosidic linkages in (1-&gt;3)-beta-D-glucans.. In terms of biological role, glucanases play a role in cell expansion during growth, in cell-cell fusion during mating, and in spore release during sporulation. This enzyme may be involved in beta-glucan degradation. Active on laminarin and lichenan. The chain is Probable glucan endo-1,3-beta-glucosidase btgC (btgC) from Aspergillus oryzae (strain ATCC 42149 / RIB 40) (Yellow koji mold).